The primary structure comprises 741 residues: Methionine--tRNA ligase (741 aa).

The short motif at 11–21 is the 'HIGH' region element; it reads PYANGPIHAGH. Positions 143, 146, 156, and 159 each coordinate Zn(2+). Positions 345–349 match the 'KMSKS' region motif; that stretch reads KFSTS. Residue threonine 348 participates in ATP binding. In terms of domain architecture, tRNA-binding spans 641-741; it reads EFAKLDLRVG…KEVKLGARIR (101 aa).

This sequence belongs to the class-I aminoacyl-tRNA synthetase family. MetG type 1 subfamily. Homodimer. Zn(2+) serves as cofactor.

Its subcellular location is the cytoplasm. The catalysed reaction is tRNA(Met) + L-methionine + ATP = L-methionyl-tRNA(Met) + AMP + diphosphate. In terms of biological role, is required not only for elongation of protein synthesis but also for the initiation of all mRNA translation through initiator tRNA(fMet) aminoacylation. The sequence is that of Methionine--tRNA ligase from Thermococcus kodakarensis (strain ATCC BAA-918 / JCM 12380 / KOD1) (Pyrococcus kodakaraensis (strain KOD1)).